Here is a 266-residue protein sequence, read N- to C-terminus: CAAX prenyl protease 2 (266 aa).

Transmembrane regions (helical) follow at residues 1-21, 42-59, and 78-98; these read MGAG…VHLF, LLSN…LRDY, and ITYP…MMQI. Residues Glu-131 and His-164 each act as proton donor/acceptor in the active site. A run of 3 helical transmembrane segments spans residues 186-206, 210-230, and 239-259; these read GFQF…QLTT, IVPI…WLEI, and RLTL…LLYT.

This sequence belongs to the peptidase U48 family.

It localises to the endoplasmic reticulum membrane. The protein resides in the membrane. The catalysed reaction is Hydrolyzes the peptide bond -P2-(S-farnesyl or geranylgeranyl)C-P1'-P2'-P3'-COOH where P1' and P2' are amino acids with aliphatic sidechains and P3' is any C-terminal residue.. Protease involved in the processing of a variety of prenylated proteins containing the C-terminal CAAX motif, where C is a cysteine modified with an isoprenoid lipid, A is an aliphatic amino acid and X is any C-terminal amino acid. Proteolytically removes the C-terminal three residues of farnesylated and geranylated proteins, leaving the prenylated cysteine as the new C-terminus. This is CAAX prenyl protease 2 from Caenorhabditis elegans.